The following is a 123-amino-acid chain: uncharacterized protein (123 aa).

Residues 5–25 (GTLVILFAIILILCIMLLFYY) form a helical membrane-spanning segment.

Belongs to the asfivirus CP123L family.

Its subcellular location is the host membrane. The protein resides in the virion. This is an uncharacterized protein from Ornithodoros (relapsing fever ticks).